The primary structure comprises 65 residues: uncharacterized protein (65 aa).

It localises to the plastid. It is found in the chloroplast. This is an uncharacterized protein from Porphyra purpurea (Red seaweed).